The following is a 110-amino-acid chain: Integration host factor subunit beta (110 aa).

This sequence belongs to the bacterial histone-like protein family. As to quaternary structure, heterodimer of an alpha and a beta chain.

Functionally, this protein is one of the two subunits of integration host factor, a specific DNA-binding protein that functions in genetic recombination as well as in transcriptional and translational control. This chain is Integration host factor subunit beta, found in Parvibaculum lavamentivorans (strain DS-1 / DSM 13023 / NCIMB 13966).